Reading from the N-terminus, the 365-residue chain is tRNA-specific 2-thiouridylase MnmA (365 aa).

Residues 9-16 (AMSGGVDS) and M35 each bind ATP. The active-site Nucleophile is C105. The cysteines at positions 105 and 203 are disulfide-linked. G129 contributes to the ATP binding site. An interaction with tRNA region spans residues 153 to 155 (KDQ). C203 functions as the Cysteine persulfide intermediate in the catalytic mechanism. The segment at 308 to 309 (RY) is interaction with tRNA.

It belongs to the MnmA/TRMU family.

The protein localises to the cytoplasm. It catalyses the reaction S-sulfanyl-L-cysteinyl-[protein] + uridine(34) in tRNA + AH2 + ATP = 2-thiouridine(34) in tRNA + L-cysteinyl-[protein] + A + AMP + diphosphate + H(+). Catalyzes the 2-thiolation of uridine at the wobble position (U34) of tRNA, leading to the formation of s(2)U34. This is tRNA-specific 2-thiouridylase MnmA from Pelotomaculum thermopropionicum (strain DSM 13744 / JCM 10971 / SI).